The following is a 209-amino-acid chain: Holliday junction branch migration complex subunit RuvA (209 aa).

Positions 1–70 (MINYLRGQAI…EEQPLLYGFG (70 aa)) are domain I. The domain II stretch occupies residues 71–149 (TAPERELFRQ…AWRQLREATT (79 aa)). The segment at 150–158 (TITAILPAA) is flexible linker. Residues 158 to 209 (AAILEDVQMTLLALGYSQEEIDRAMAVLSQDALFSKNTQPEDWIKGAINWLG) are domain III.

It belongs to the RuvA family. As to quaternary structure, homotetramer. Forms an RuvA(8)-RuvB(12)-Holliday junction (HJ) complex. HJ DNA is sandwiched between 2 RuvA tetramers; dsDNA enters through RuvA and exits via RuvB. An RuvB hexamer assembles on each DNA strand where it exits the tetramer. Each RuvB hexamer is contacted by two RuvA subunits (via domain III) on 2 adjacent RuvB subunits; this complex drives branch migration. In the full resolvosome a probable DNA-RuvA(4)-RuvB(12)-RuvC(2) complex forms which resolves the HJ.

It localises to the cytoplasm. The RuvA-RuvB-RuvC complex processes Holliday junction (HJ) DNA during genetic recombination and DNA repair, while the RuvA-RuvB complex plays an important role in the rescue of blocked DNA replication forks via replication fork reversal (RFR). RuvA specifically binds to HJ cruciform DNA, conferring on it an open structure. The RuvB hexamer acts as an ATP-dependent pump, pulling dsDNA into and through the RuvAB complex. HJ branch migration allows RuvC to scan DNA until it finds its consensus sequence, where it cleaves and resolves the cruciform DNA. The polypeptide is Holliday junction branch migration complex subunit RuvA (Microcystis aeruginosa (strain NIES-843 / IAM M-2473)).